A 32-amino-acid chain; its full sequence is Delta-conotoxin-like CnVIB (32 aa).

Intrachain disulfides connect Cys3-Cys18, Cys10-Cys22, and Cys17-Cys27. 2 positions are modified to 4-hydroxyproline: Pro6 and Pro14.

The protein belongs to the conotoxin O1 superfamily. In terms of tissue distribution, expressed by the venom duct.

The protein localises to the secreted. In terms of biological role, delta-conotoxins bind to site 6 of voltage-gated sodium channels (Nav) and inhibit the inactivation process. This toxin acts on Nav1.4/SCN4A and Nav1.6/SCN8A (EC(50)=2.3 uM). This is Delta-conotoxin-like CnVIB from Conus consors (Singed cone).